Consider the following 536-residue polypeptide: T-complex protein 1 subunit delta (536 aa).

The segment at 1 to 21 is disordered; the sequence is MAAVAAPMASKPRGSKAESFV.

It belongs to the TCP-1 chaperonin family. In terms of assembly, heterooligomeric complex of about 850 to 900 kDa that forms two stacked rings, 12 to 16 nm in diameter.

The protein resides in the cytoplasm. Its function is as follows. Molecular chaperone; assists the folding of proteins upon ATP hydrolysis. Known to play a role, in vitro, in the folding of actin and tubulin. The sequence is that of T-complex protein 1 subunit delta from Arabidopsis thaliana (Mouse-ear cress).